We begin with the raw amino-acid sequence, 62 residues long: Keratin-associated protein 19-5 (62 aa).

The interval Gly5–Tyr56 is 14 X 2 AA repeats of G-[YCGS].

Belongs to the KRTAP type 19 family. As to quaternary structure, interacts with hair keratins. In terms of tissue distribution, expressed in skin during two hair growth cycles. Expression restricted to the cortical cells of hair follicles, appearing first in the cortical cells processing the flat nuclei located a few cells above the dermal papilla.

In terms of biological role, in the hair cortex, hair keratin intermediate filaments are embedded in an interfilamentous matrix, consisting of hair keratin-associated proteins (KRTAP), which are essential for the formation of a rigid and resistant hair shaft through their extensive disulfide bond cross-linking with abundant cysteine residues of hair keratins. The matrix proteins include the high-sulfur and high-glycine-tyrosine keratins. The chain is Keratin-associated protein 19-5 (Krtap19-5) from Mus musculus (Mouse).